The primary structure comprises 579 residues: L-ascorbate oxidase (579 aa).

The signal sequence occupies residues 1-30 (MLQMGKAREPNFLILFFFGLILAFGISSEG). 2 Plastocyanin-like domains span residues 33–152 (IRHY…LIVD) and 164–330 (DGEI…NYLP). 3 disulfide bridges follow: cysteine 49–cysteine 231, cysteine 111–cysteine 568, and cysteine 210–cysteine 223. Positions 90 and 92 each coordinate Cu cation. A glycan (N-linked (GlcNAc...) asparagine) is linked at asparagine 122. The Cu cation site is built by histidine 134 and histidine 136. Residues asparagine 355 and asparagine 470 are each glycosylated (N-linked (GlcNAc...) asparagine). A Plastocyanin-like 3 domain is found at 374 to 553 (NRRIFLLNTQ…HMGMGVVFAE (180 aa)). Positions 475, 478, 480, 536, 537, 538, 542, and 547 each coordinate Cu cation.

It belongs to the multicopper oxidase family. Dimer. It depends on Cu cation as a cofactor.

The protein localises to the secreted. It carries out the reaction 4 L-ascorbate + O2 = 4 monodehydro-L-ascorbate radical + 2 H2O. Functionally, may be involved in a redox system involving ascorbic acid. This is L-ascorbate oxidase (AAO) from Cucurbita maxima (Pumpkin).